Reading from the N-terminus, the 115-residue chain is Large ribosomal subunit protein bL19 (115 aa).

The protein belongs to the bacterial ribosomal protein bL19 family.

This protein is located at the 30S-50S ribosomal subunit interface and may play a role in the structure and function of the aminoacyl-tRNA binding site. This chain is Large ribosomal subunit protein bL19, found in Streptococcus uberis (strain ATCC BAA-854 / 0140J).